The following is a 704-amino-acid chain: Elongation factor G (704 aa).

Positions 8 to 290 (ARYRNIGISA…AVIDYLPSPV (283 aa)) constitute a tr-type G domain. GTP is bound by residues 17–24 (AHIDAGKT), 88–92 (DTPGH), and 142–145 (NKMD).

This sequence belongs to the TRAFAC class translation factor GTPase superfamily. Classic translation factor GTPase family. EF-G/EF-2 subfamily.

Its subcellular location is the cytoplasm. In terms of biological role, catalyzes the GTP-dependent ribosomal translocation step during translation elongation. During this step, the ribosome changes from the pre-translocational (PRE) to the post-translocational (POST) state as the newly formed A-site-bound peptidyl-tRNA and P-site-bound deacylated tRNA move to the P and E sites, respectively. Catalyzes the coordinated movement of the two tRNA molecules, the mRNA and conformational changes in the ribosome. The protein is Elongation factor G of Salmonella arizonae (strain ATCC BAA-731 / CDC346-86 / RSK2980).